The chain runs to 115 residues: Large ribosomal subunit protein bL19 (115 aa).

It belongs to the bacterial ribosomal protein bL19 family.

This protein is located at the 30S-50S ribosomal subunit interface and may play a role in the structure and function of the aminoacyl-tRNA binding site. The polypeptide is Large ribosomal subunit protein bL19 (Buchnera aphidicola subsp. Schizaphis graminum (strain Sg)).